A 384-amino-acid polypeptide reads, in one-letter code: tRNA-specific 2-thiouridylase MnmA (384 aa).

ATP-binding positions include 9-16 (GMSGGVDS) and M35. An interaction with target base in tRNA region spans residues 95 to 97 (NPD). C100 (nucleophile) is an active-site residue. Residues C100 and C196 are joined by a disulfide bond. G124 serves as a coordination point for ATP. The tract at residues 146–148 (KDQ) is interaction with tRNA. The active-site Cysteine persulfide intermediate is C196. Residues 308-309 (RY) form an interaction with tRNA region.

It belongs to the MnmA/TRMU family.

Its subcellular location is the cytoplasm. It catalyses the reaction S-sulfanyl-L-cysteinyl-[protein] + uridine(34) in tRNA + AH2 + ATP = 2-thiouridine(34) in tRNA + L-cysteinyl-[protein] + A + AMP + diphosphate + H(+). Catalyzes the 2-thiolation of uridine at the wobble position (U34) of tRNA, leading to the formation of s(2)U34. The polypeptide is tRNA-specific 2-thiouridylase MnmA (Paraburkholderia phymatum (strain DSM 17167 / CIP 108236 / LMG 21445 / STM815) (Burkholderia phymatum)).